We begin with the raw amino-acid sequence, 364 residues long: Mannose-1-phosphate guanyltransferase (364 aa).

It belongs to the transferase hexapeptide repeat family.

The protein resides in the cytoplasm. The catalysed reaction is alpha-D-mannose 1-phosphate + GTP + H(+) = GDP-alpha-D-mannose + diphosphate. It functions in the pathway nucleotide-sugar biosynthesis; GDP-alpha-D-mannose biosynthesis; GDP-alpha-D-mannose from alpha-D-mannose 1-phosphate (GTP route): step 1/1. In terms of biological role, involved in cell wall synthesis where it is required for glycosylation. Involved in cell cycle progression through cell-size checkpoint. This is Mannose-1-phosphate guanyltransferase (MPG1) from Cryptococcus neoformans var. neoformans serotype D (strain B-3501A) (Filobasidiella neoformans).